The sequence spans 550 residues: Arginine--tRNA ligase (550 aa).

A 'HIGH' region motif is present at residues 130-140; the sequence is ANPTGPIHIGG.

This sequence belongs to the class-I aminoacyl-tRNA synthetase family. As to quaternary structure, monomer.

The protein localises to the cytoplasm. It carries out the reaction tRNA(Arg) + L-arginine + ATP = L-arginyl-tRNA(Arg) + AMP + diphosphate. The chain is Arginine--tRNA ligase from Mycolicibacterium paratuberculosis (strain ATCC BAA-968 / K-10) (Mycobacterium paratuberculosis).